Reading from the N-terminus, the 828-residue chain is Periplasmic nitrate reductase (828 aa).

Positions 1–31 form a signal peptide, tat-type signal; sequence MKLSRRSFMKANAVAAAAAAAGLSVPGVARA. In terms of domain architecture, 4Fe-4S Mo/W bis-MGD-type spans 39 to 95; that stretch reads IKWDKAPCRFCGTGCGVLVGTQQGRVVACQGDPDAPVNRGLNCIKGYFLPKIMYGKD. Residues Cys46, Cys49, Cys53, and Cys81 each contribute to the [4Fe-4S] cluster site. Mo-bis(molybdopterin guanine dinucleotide)-binding positions include Lys83, Gln150, Asn175, Cys179, 212 to 219, 243 to 247, 262 to 264, Met372, Gln376, Asn482, 508 to 509, Lys531, Asp558, and 718 to 727; these read WGANMAEM, STYQH, QSD, SD, and TGRVLEHWHT. Phe794 lines the substrate pocket. Residues Asn802 and Lys819 each coordinate Mo-bis(molybdopterin guanine dinucleotide).

It belongs to the prokaryotic molybdopterin-containing oxidoreductase family. NasA/NapA/NarB subfamily. In terms of assembly, component of the periplasmic nitrate reductase NapAB complex composed of NapA and NapB. It depends on [4Fe-4S] cluster as a cofactor. The cofactor is Mo-bis(molybdopterin guanine dinucleotide). Post-translationally, predicted to be exported by the Tat system. The position of the signal peptide cleavage has not been experimentally proven.

It localises to the periplasm. The catalysed reaction is 2 Fe(II)-[cytochrome] + nitrate + 2 H(+) = 2 Fe(III)-[cytochrome] + nitrite + H2O. Catalytic subunit of the periplasmic nitrate reductase complex NapAB. Receives electrons from NapB and catalyzes the reduction of nitrate to nitrite. The chain is Periplasmic nitrate reductase from Escherichia coli O8 (strain IAI1).